Consider the following 432-residue polypeptide: MKLKWESISNLQQNTYLIKLVAATLITCLAFRFFVFRFGQFSPVQVSVTGNSNSQISPTSVILSDNEDQIPVDIEVEKCDLFTGKWIKDPLGPIYTNESCGIVVDAHQNCITNGRPDSGFLNWKWKPNDCSLPRFDSLRFLQLMRNKSWAIIGDSIARNHVESLLCMLSTVEKPVEVYHDENYRSKRWHFPSYNFTVSNIWSPFLVQADIFEDSNGVSSAAVQLHLDKLDNTWTDLFPSLDYAIISSGEWFLKTAVYHENANPVGCHGCPESSNMTDLGFDYAYNTSLRHVMDFIAKSKTKGMIFFRTSIPDHFEDGEWHNGGTCKKTEPVGEEAVEMKVLNKILRDVEINQFERVVTEMGQESENLKLLDFAGMLLTRPDGHPGPYREFRPFDKDKNATVQNDCLHWCLPGPIDHLNDVILEIIVNGRTGK.

Residues 13 to 35 form a helical; Signal-anchor for type II membrane protein membrane-spanning segment; it reads QNTYLIKLVAATLITCLAFRFFV. The GDS motif signature appears at 153–155; sequence GDS. The DCXHWCLPGXXDXWN motif signature appears at 404–418; the sequence is DCLHWCLPGPIDHLN.

The protein belongs to the PC-esterase family. TBL subfamily.

It localises to the membrane. May act as a bridging protein that binds pectin and other cell wall polysaccharides. Probably involved in maintaining esterification of pectins. May be involved in the specific O-acetylation of cell wall polymers. This is Protein trichome birefringence-like 23 (TBL23) from Arabidopsis thaliana (Mouse-ear cress).